The sequence spans 339 residues: Phenylalanine--tRNA ligase alpha subunit (339 aa).

Mg(2+) is bound at residue E254.

The protein belongs to the class-II aminoacyl-tRNA synthetase family. Phe-tRNA synthetase alpha subunit type 1 subfamily. In terms of assembly, tetramer of two alpha and two beta subunits. The cofactor is Mg(2+).

Its subcellular location is the cytoplasm. It carries out the reaction tRNA(Phe) + L-phenylalanine + ATP = L-phenylalanyl-tRNA(Phe) + AMP + diphosphate + H(+). The protein is Phenylalanine--tRNA ligase alpha subunit of Clostridium perfringens (strain ATCC 13124 / DSM 756 / JCM 1290 / NCIMB 6125 / NCTC 8237 / Type A).